A 634-amino-acid chain; its full sequence is MRWLRPAGRRREQESVSGHLGPPAGAPAAPETPTCLPDTTPHPAPVVCSADPQLALESLDPRTLRLLWRQRELEIQALRWAIQNGEDARLCHILEEVAGLPPKRSSHSQEKLLQNQVQKLIQELKEQKERAQWEKEHLEERLLQTTRTLQEMEAELQNLQKSCLLQLARSSWVGRMLRSQTGSVEVVTAETLMDPSDLSENIQAPTGEGFRLEDVDWNSVARRYPNLFTNMEPSSKQKQPRPWPQLDTGSPESSGKHSERHHKTVEWGSLPCLNTSSSGGADSDSSSCRPGLPSFVQVIGHPPRDHRASSEQALVQAGSYSRDSEDLQKTHSPRHGEPVLSPQPCTDPDHWSPELLQSPTGLKIVAVSCREKFVRIFNPSQESTADLSGMVLKQLVRGFPERLYRFPPGTLLAPRHHVTVWGEATRSAKKPLRASSSREPVPLLSIRGCATLLLSPKGEVLSEHRIPRRETPAPRVFADGTDLSIDRFPLPEAGPGADTRKPPRPPRPLRKGRVREPRVSRRRPGTRGLLPPVSSGKLFHAREGPARPENPEIPAPQHLPAIPGDPTLPSPPAEAGLGLEDCRLQKEHRVRVCRKSVDRSCPLVALSVQNTAESRFGFRFLSCLPVTADTCRGA.

The disordered stretch occupies residues 1–44 (MRWLRPAGRRREQESVSGHLGPPAGAPAAPETPTCLPDTTPHPA). Residues 106–169 (SHSQEKLLQN…QKSCLLQLAR (64 aa)) adopt a coiled-coil conformation. Residues 228–237 (FTNMEPSSKQ) are compositionally biased toward polar residues. Disordered regions lie at residues 228-349 (FTNM…TDPD) and 464-575 (HRIP…PAEA). Low complexity predominate over residues 276–287 (SSSGGADSDSSS). A compositionally biased stretch (polar residues) spans 310–321 (SEQALVQAGSYS). The span at 322-337 (RDSEDLQKTHSPRHGE) shows a compositional bias: basic and acidic residues. The region spanning 350–468 (HWSPELLQSP…EVLSEHRIPR (119 aa)) is the LTD domain. A compositionally biased stretch (basic residues) spans 502–513 (PPRPPRPLRKGR). Basic and acidic residues predominate over residues 540–550 (HAREGPARPEN).

The chain is Lamin tail domain-containing protein 2 (LMNTD2) from Homo sapiens (Human).